Here is a 545-residue protein sequence, read N- to C-terminus: Hydroxylamine reductase (545 aa).

[4Fe-4S] cluster is bound by residues Cys-7, Cys-10, Cys-19, and Cys-25. His-241, Glu-265, Cys-309, Cys-400, Cys-428, Cys-453, Glu-488, and Lys-490 together coordinate hybrid [4Fe-2O-2S] cluster. Cys-400 carries the cysteine persulfide; in oxidized form modification.

It belongs to the HCP family. Monomer. The cofactor is [4Fe-4S] cluster. Hybrid [4Fe-2O-2S] cluster serves as cofactor.

The protein resides in the cytoplasm. It carries out the reaction A + NH4(+) + H2O = hydroxylamine + AH2 + H(+). Catalyzes the reduction of hydroxylamine to form NH(3) and H(2)O. The sequence is that of Hydroxylamine reductase from Desulfovibrio desulfuricans (strain ATCC 27774 / DSM 6949 / MB).